A 481-amino-acid chain; its full sequence is MFRLHSLSALAELAVGSRCYHGGSQPTQMKRRLMMVAFLGASAVTASTGLLWKRALAESPPSVNNPKSELGDKGKNKDEGEVCNHEKKAADVCLEPHPEEKKKKRSGFRDRKVMEYENRIRAYSTPDKIFRYFATLKVINEPGESEVFMTPQDFVRSITPNEKQPEHLGLDQYTIKRFDGKKIAQEREKFADEGSIFYTLGECGLISFSDYIFLTTVLSTPQRNFEIAFKMFDLNGDGEVDMEEFEQASCPGNIIRSQTSMGMRHRDRPTTGNTLKSGLCSALTTYFFGADLKGKLTIKNFLEFQRKLQHDVLKLEFERHDPVDGKITERQFGGMLLAYSGVQSKKLTAMQKQLKKHFKEGKGLTFQEVENFFTFLKNINDVDTALSFYHMAGASLDKVTMQQVARTVAKVELSDHVCDVVFALFDCDGNGELSNKEFVSIMKQRLMRGLEKPKDMGFTRLMQAMWKCAQETAWDFALPKQ.

The N-terminal 33 residues, 1-33, are a transit peptide targeting the mitochondrion; the sequence is MFRLHSLSALAELAVGSRCYHGGSQPTQMKRRL. Residues 58-82 form a disordered region; the sequence is ESPPSVNNPKSELGDKGKNKDEGEV. Basic and acidic residues predominate over residues 69–82; the sequence is ELGDKGKNKDEGEV. The segment at 101–112 is polybasic region; that stretch reads KKKKRSGFRDRK. Position 124 is a phosphoserine (Ser124). A k/R-ring region spans residues 128-131; the sequence is KIFR. The 36-residue stretch at 220–255 folds into the EF-hand 1 domain; the sequence is TPQRNFEIAFKMFDLNGDGEVDMEEFEQASCPGNII. Ca(2+) contacts are provided by Asp233, Asn235, Asp237, Glu239, and Glu244. Residues 264–268 form a k/R-ring region; sequence RHRDR. Residues 413–448 enclose the EF-hand 2 domain; that stretch reads LSDHVCDVVFALFDCDGNGELSNKEFVSIMKQRLMR. The Ca(2+) site is built by Asp426, Asp428, Asn430, Glu432, and Glu437. Position 460 is an asymmetric dimethylarginine (Arg460). Positions 460 to 470 are C-helix region; it reads RLMQAMWKCAQ.

It belongs to the MICU1 family. MICU1 subfamily. In terms of assembly, heterodimer; disulfide-linked; heterodimerizes with MICU2 or MICU3. Homodimer; disulfide-linked. Component of the uniplex complex, composed of MCU, EMRE/SMDT1, MICU1 and MICU2 (or MICU3) in a 4:4:1:1 stoichiometry. The composition of calcium sensors within the uniplex complex can differ depending on tissues: a MICU1 homodimer can be present instead of the MICU1-MICU2 heterodimer in skeletal-muscle and kidney. MICU1 is recruited to the uniplex complex by EMRE/SMDT1, and it associates with MCU at low calcium levels, occluding the pore of the MCU channel. Associates with the MICOS complex. Interacts with SLC25A23. Interacts with CHCHD4/MIA40; which introduces the interchain disulfide bond with MICU2. Interacts (when methylated) with UCP2; leading to decrease the calcium sensitivity of MICU1. Post-translationally, phosphorylation at Ser-124 by AKT1 impairs its maturation and stability. In terms of processing, asymmetric dimethylation at Arg-460 by PRMT1 decreases the calcium sensitivity of MICU1 by promoting interaction with UCP2. Degraded by YME1L1 when not complexed as homodimer or heterodimer. Not degraded when complexed as homodimer or heterodimer; the presence of the interchain disulfide bond protecting MICU1 from degradation by YME1L1.

It localises to the mitochondrion intermembrane space. Its subcellular location is the mitochondrion inner membrane. Its function is as follows. Calcium sensor of the mitochondrial calcium uniporter (MCU) channel, which senses calcium level via its EF-hand domains. MICU1 and MICU2 (or MICU3) form a disulfide-linked heterodimer that stimulates and inhibits MCU activity, depending on the concentration of calcium. At low calcium levels, MICU1 occludes the pore of the MCU channel, preventing mitochondrial calcium uptake. At higher calcium levels, calcium-binding to MICU1 and MICU2 (or MICU3) induces a conformational change that weakens MCU-MICU1 interactions and moves the MICU1-MICU2 heterodimer away from the pore, allowing calcium permeation through the MCU channel. Also required to protect against manganese toxicity by preventing manganese uptake by MCU: mechanistically, manganese-binding to its EF-hand domains does not induce any conformational change, maintaining MCU pore occlusion. Acts as a regulator of mitochondrial cristae structure independently of its ability to regulate the mitochondrial calcium uniporter channel. Regulates glucose-dependent insulin secretion in pancreatic beta-cells by regulating mitochondrial calcium uptake. Induces T-helper 1-mediated autoreactivity, which is accompanied by the release of IFNG. The chain is Calcium uptake protein 1, mitochondrial (MICU1) from Ailuropoda melanoleuca (Giant panda).